The chain runs to 290 residues: MRSFSFTKMHGLGNSYIYVDLFRETLPEEELPAIARSVADVHTGIGSDGLILICPSEKAPVKMRIFNSDGSEGKNCGNGLRCVAKYAYEHGIVSDRTFLIETLSGLVEARVAVADGEVTSVTVDMGEPRLERSAIPMLGPEAERVVAEPFAIAGGEYEITAVSMGNPHVIFYVDDIQKAPVTTLGPLVEKDPRFPEGVNVEFVEVVNERELHFRVWERGSGVTQACGTGACAAVVASVLNGKTARGEETVVHLAGGDLTIVWGHDGRVRMTGPAETVCTGVYYYRGGRNG.

Substrate contacts are provided by Asn-14 and Asn-67. Cys-76 (proton donor) is an active-site residue. Substrate is bound by residues 77–78, Asn-166, Asn-199, and 217–218; these read GN and ER. Residue Cys-226 is the Proton acceptor of the active site. 227-228 provides a ligand contact to substrate; it reads GT.

Belongs to the diaminopimelate epimerase family. As to quaternary structure, homodimer.

It is found in the cytoplasm. It carries out the reaction (2S,6S)-2,6-diaminopimelate = meso-2,6-diaminopimelate. The protein operates within amino-acid biosynthesis; L-lysine biosynthesis via DAP pathway; DL-2,6-diaminopimelate from LL-2,6-diaminopimelate: step 1/1. In terms of biological role, catalyzes the stereoinversion of LL-2,6-diaminopimelate (L,L-DAP) to meso-diaminopimelate (meso-DAP), a precursor of L-lysine and an essential component of the bacterial peptidoglycan. In Geobacillus kaustophilus (strain HTA426), this protein is Diaminopimelate epimerase.